Reading from the N-terminus, the 324-residue chain is Cyclic GMP-AMP synthase CdnE03 (324 aa).

2 residues coordinate Mg(2+): D87 and D89. ATP-binding positions include D89, 144-145 (NK), and D159. D159 serves as a coordination point for Mg(2+). K224 and S243 together coordinate GTP.

It belongs to the CD-NTase family. E03 subfamily. It depends on Mg(2+) as a cofactor.

The enzyme catalyses GTP + ATP = 3',2'-cGAMP + 2 diphosphate. Activated by a virus-derived, approximately 400 nucleotide RNA (called CBASS-activating bacteriophage RNA, cabRNA) that begins in the viral terminase subunit terS and extends into terL. RNA secondary and/or tertiary structure, as well as viral infection itself, are important for CdnE activation. A much longer RNA (escaper RNA) with a different secondary structure, derived from a terS-mutated virus still binds to this protein, but does not activate its nucleotide cyclase activity. Shorter viral-derived RNAs (34 and 49 nt) with extensive predicted secondary structure also activate the enzyme, although not as well as full-length cabRNA. Functionally, cyclic nucleotide synthase (second messenger synthase) of a CBASS antivirus system. CBASS (cyclic oligonucleotide-based antiphage signaling system) provides immunity against bacteriophage. The CD-NTase protein synthesizes cyclic nucleotides in response to infection; these serve as specific second messenger signals. The signals activate a diverse range of effectors, leading to bacterial cell death and thus abortive phage infection. The effector for this system is downstream Cap15. A type I-B CBASS system. Cyclic dinucleotide synthase that catalyzes the synthesis of 3',2'-cyclic GMP-AMP (cGAMP) from GTP and ATP upon activation by viral-derived cabRNA. Binds cabRNA via positive charges in its N-terminus. In terms of biological role, protects S.aureus against phage infection. When the CBASS operon (cdnE-cap15) is introduced in S.aureus strain RN4220 there is strong protection against lytic DNA phages 80alpha-vir and phi-NM1-gamma-6 but little to no protection against phages phi-NM4-gamma-4 or phi-12-gamma-3. This chain is Cyclic GMP-AMP synthase CdnE03, found in Staphylococcus schleiferi.